The following is a 726-amino-acid chain: Catalase-peroxidase (726 aa).

Positions 1–33 (MSTSDDIHNTTATGKCPFHQGGHDQSAGAGTTT) are disordered. The segment at residues 105–226 (WHGAGTYRSI…LGATEMGLIY (122 aa)) is a cross-link (tryptophyl-tyrosyl-methioninium (Trp-Tyr) (with M-252)). Residue His106 is the Proton acceptor of the active site. Positions 226–252 (YVNPEGPDHSGEPLSAAAAIRATFGNM) form a cross-link, tryptophyl-tyrosyl-methioninium (Tyr-Met) (with W-105). A heme b-binding site is contributed by His267.

This sequence belongs to the peroxidase family. Peroxidase/catalase subfamily. As to quaternary structure, homodimer or homotetramer. Requires heme b as cofactor. Formation of the three residue Trp-Tyr-Met cross-link is important for the catalase, but not the peroxidase activity of the enzyme.

It catalyses the reaction H2O2 + AH2 = A + 2 H2O. It carries out the reaction 2 H2O2 = O2 + 2 H2O. Its function is as follows. Bifunctional enzyme with both catalase and broad-spectrum peroxidase activity. The polypeptide is Catalase-peroxidase (Shigella flexneri).